The chain runs to 646 residues: Nucleoside triphosphatase I (646 aa).

In terms of domain architecture, Helicase ATP-binding spans phenylalanine 48–asparagine 213. Tryptophan 61–threonine 68 provides a ligand contact to ATP. Positions aspartate 151 to histidine 154 match the DEXH box motif. In terms of domain architecture, Helicase C-terminal spans tyrosine 377–lysine 540. The segment at aspartate 466–isoleucine 532 is binding to the cap-specific mRNA (nucleoside-2'-O-)-methyltransferase.

This sequence belongs to the helicase family. NPH I subfamily. Monomer. Interacts (via C-terminus) with RAP94 (via N-terminus). Interacts with the cap-specific mRNA (nucleoside-2'-O-)-methyltransferase.

Its subcellular location is the virion. The enzyme catalyses a ribonucleoside 5'-triphosphate + H2O = a ribonucleoside 5'-diphosphate + phosphate + H(+). DNA-dependent ATPase required for providing the needed energy to achieve the termination of early transcripts. Acts in concert with the RAP94 subunit of the virion RNA polymerase and the capping enzyme/VTF to catalyze release of UUUUUNU-containing nascent RNA from the elongation complex. NPH-I must bind ssDNA in order to exhibit ATPase activity. The polypeptide is Nucleoside triphosphatase I (NPH1) (Heliothis armigera entomopoxvirus (HaEPV)).